The sequence spans 473 residues: Photosystem II CP43 reaction center protein (473 aa).

The propeptide occupies 1-14 (MKILYSLRRFYHVE). Residue T15 is modified to N-acetylthreonine. The residue at position 15 (T15) is a Phosphothreonine. 5 helical membrane passes run 69–93 (LFEVAHFVPEKPMYEQGLILLPHLA), 134–155 (LLGPETLEESFPFFGYVWKDRN), 178–200 (KALYFGGVYDTWAPGGGDVRKIT), 255–275 (KPFAWARRAFVWSGEAYLSYS), and 291–312 (WFNNTAYPSEFYGPTGPEASQA). E367 contributes to the [CaMn4O5] cluster binding site. The chain crosses the membrane as a helical span at residues 447–471 (RARAAAAGFEKGIDRDLEPVLYMNP).

This sequence belongs to the PsbB/PsbC family. PsbC subfamily. PSII is composed of 1 copy each of membrane proteins PsbA, PsbB, PsbC, PsbD, PsbE, PsbF, PsbH, PsbI, PsbJ, PsbK, PsbL, PsbM, PsbT, PsbX, PsbY, PsbZ, Psb30/Ycf12, at least 3 peripheral proteins of the oxygen-evolving complex and a large number of cofactors. It forms dimeric complexes. The cofactor is Binds multiple chlorophylls and provides some of the ligands for the Ca-4Mn-5O cluster of the oxygen-evolving complex. It may also provide a ligand for a Cl- that is required for oxygen evolution. PSII binds additional chlorophylls, carotenoids and specific lipids..

The protein localises to the plastid. The protein resides in the chloroplast thylakoid membrane. Functionally, one of the components of the core complex of photosystem II (PSII). It binds chlorophyll and helps catalyze the primary light-induced photochemical processes of PSII. PSII is a light-driven water:plastoquinone oxidoreductase, using light energy to abstract electrons from H(2)O, generating O(2) and a proton gradient subsequently used for ATP formation. The polypeptide is Photosystem II CP43 reaction center protein (Lolium perenne (Perennial ryegrass)).